A 397-amino-acid polypeptide reads, in one-letter code: Kappa-carrageenase (397 aa).

The first 25 residues, 1–25 (MKPISIVAFPIPAISMLLLSAVSQA), serve as a signal peptide directing secretion. Residues 26–299 (ASMQPPIAKP…YVRTWVKVGN (274 aa)) enclose the GH16 domain. The cysteines at positions 98 and 268 are disulfide-linked. The active-site Nucleophile is the Glu163. Asp165 is an active-site residue. Glu168 serves as the catalytic Proton donor. One can recognise a BIG2 domain in the interval 316–387 (AVNSVQLSAA…TITVKTKNKG (72 aa)).

The protein belongs to the glycosyl hydrolase 16 family.

Its subcellular location is the periplasm. It catalyses the reaction Endohydrolysis of (1-&gt;4)-beta-D-linkages between D-galactose 4-sulfate and 3,6-anhydro-D-galactose in kappa-carrageenans.. This is Kappa-carrageenase (cgkA) from Pseudoalteromonas carrageenovora (Alteromonas carrageenovora).